We begin with the raw amino-acid sequence, 1758 residues long: uncharacterized protein (1758 aa).

Positions 1-12 are cleaved as a signal peptide; sequence MCFFLGSRLAYA. Positions 1465–1758 constitute an Autotransporter domain; the sequence is ENLYNNGMWI…SFILGGNYYF (294 aa).

The protein localises to the cell outer membrane. This is an uncharacterized protein from Escherichia coli (strain K12).